The sequence spans 260 residues: uncharacterized protein (260 aa).

A coiled-coil region spans residues Met-1 to Ser-38.

This is an uncharacterized protein from Caenorhabditis elegans.